A 142-amino-acid polypeptide reads, in one-letter code: Large ribosomal subunit protein uL13 (142 aa).

Belongs to the universal ribosomal protein uL13 family. Part of the 50S ribosomal subunit.

In terms of biological role, this protein is one of the early assembly proteins of the 50S ribosomal subunit, although it is not seen to bind rRNA by itself. It is important during the early stages of 50S assembly. The protein is Large ribosomal subunit protein uL13 of Yersinia pseudotuberculosis serotype O:1b (strain IP 31758).